The primary structure comprises 219 residues: Ras-like protein 1 (219 aa).

15–22 (GDGGVGKS) contacts GTP. The Effector region motif lies at 37 to 45 (YDPTIEDSY). GTP is bound by residues 62–66 (DTAGQ) and 121–124 (NKCD). At Cys216 the chain carries Cysteine methyl ester. Cys216 carries the S-farnesyl cysteine lipid modification. A propeptide spans 217 to 219 (VIC) (removed in mature form).

Belongs to the small GTPase superfamily. Ras family. As to quaternary structure, scd1, scd2, cdc42, and ras1, in its GTP-bound state, act cooperatively to form a protein complex. Post-translationally, palmitoylated by the erf2-erf4 complex.

The protein localises to the cell membrane. It carries out the reaction GTP + H2O = GDP + phosphate + H(+). With respect to regulation, alternates between an inactive form bound to GDP and an active form bound to GTP. Activated by a guanine nucleotide-exchange factor (GEF) and inactivated by a GTPase-activating protein (GAP). In terms of biological role, participates in the process of sexual differentiation and the determination of cell shape. Essential for mating and for recognition of the mating pheromone, but not for vegetative growth. Does not regulate the intracellular cAMP level. Regulates two downstream pathways, namely the byr2/byr1/spk1 mitogen-activated protein kinase cascade and the cdc42 small G protein pathway. The former is relevant to mating and sporulation, whereas the latter is relevant to mating, cell growth and cell morphology. This is Ras-like protein 1 (ras1) from Schizosaccharomyces pombe (strain 972 / ATCC 24843) (Fission yeast).